The sequence spans 161 residues: Lipid droplet assembly factor 1 (161 aa).

Residues 1 to 43 are Cytoplasmic-facing; it reads MAEEEPSSVSRDLQELQRKLGLLLESFQNNSKVVAFMKSPVGR. The helical transmembrane segment at 44 to 61 threads the bilayer; that stretch reads FLDRHPFLVLTVLMFVTM. Over 62-67 the chain is Lumenal; the sequence is SAIPVG. Residues 68 to 87 form a helical membrane-spanning segment; that stretch reads FFLLIVVLTSLGALMGAILL. Over 88-93 the chain is Cytoplasmic; it reads EGLVIS. A helical membrane pass occupies residues 94-110; it reads VCGLSLLCILCGLGFVS. Over 111–116 the chain is Lumenal; the sequence is LALSGI. A helical membrane pass occupies residues 117–133; sequence TMMSYVVVSCLMSYWFS. Residues 134 to 161 lie on the Cytoplasmic side of the membrane; sequence PSRPPTQQHANIDSQLAMKFTESEKLGL.

This sequence belongs to the LDAF1 family. Interacts with BSCL2/seipin to form an oligomeric complex.

The protein resides in the endoplasmic reticulum membrane. Its subcellular location is the lipid droplet. Functionally, plays an important role in the formation of lipid droplets (LD) which are storage organelles at the center of lipid and energy homeostasis. In association with BSCL2/seipin, defines the sites of LD formation in the endoplasmic reticulum. The sequence is that of Lipid droplet assembly factor 1 from Rattus norvegicus (Rat).